Here is a 912-residue protein sequence, read N- to C-terminus: Phosphoenolpyruvate carboxylase (912 aa).

Catalysis depends on residues His-138 and Lys-575.

It belongs to the PEPCase type 1 family. Requires Mg(2+) as cofactor.

It catalyses the reaction oxaloacetate + phosphate = phosphoenolpyruvate + hydrogencarbonate. Its function is as follows. Forms oxaloacetate, a four-carbon dicarboxylic acid source for the tricarboxylic acid cycle. This is Phosphoenolpyruvate carboxylase from Lactobacillus helveticus (strain DPC 4571).